An 86-amino-acid polypeptide reads, in one-letter code: Polcalcin Nic t 2 (86 aa).

2 consecutive EF-hand domains span residues 8 to 42 and 43 to 78; these read QDIADRERIFKRFDANGDGQISATELGETLQTLGS and VTPEEVKYMMDEIDTNKDGFISFQEFIEFARANRGL. Residues D21, N23, D25, Q27, E32, D56, N58, D60, and E67 each coordinate Ca(2+).

The protein is Polcalcin Nic t 2 (Nict2) of Nicotiana tabacum (Common tobacco).